The primary structure comprises 488 residues: Thiamine transporter 2 (488 aa).

The Cytoplasmic portion of the chain corresponds to 1-8 (MDSSCRTP). A helical membrane pass occupies residues 9–29 (PSNSWVYPTVILCLFGFFSMF). Residues 30–54 (RPSEAFLIPFLSEPSKNLTSPEMTN) lie on the Extracellular side of the membrane. N46 carries N-linked (GlcNAc...) asparagine glycosylation. Residues 55–75 (EILPVWTYSYLATLPPVFVLT) form a helical membrane-spanning segment. Over 76 to 82 (DYLRYKP) the chain is Cytoplasmic. The helical transmembrane segment at 83–103 (VIMLHVVAFATSYLFLLFGQG) threads the bilayer. Residues 104–111 (VMLMQTAE) lie on the Extracellular side of the membrane. A helical membrane pass occupies residues 112–132 (FFFGVVSATEIAYFAYIYSMV). Over 133 to 145 (SPEHYQKVSSYCR) the chain is Cytoplasmic. A helical transmembrane segment spans residues 146 to 166 (SITLVAYTAGSVLAQLLVSLT). The Extracellular portion of the chain corresponds to 167–172 (NLPYSS). A helical membrane pass occupies residues 173-193 (LFYISLACVSVAFFFSLFLPM). Topologically, residues 194–276 (PKKSMFFHAK…YSSKHLVYWS (83 aa)) are cytoplasmic. A helical membrane pass occupies residues 277 to 297 (LWWAFATAGYNQILNYVQVLW). The Extracellular portion of the chain corresponds to 298–310 (EHKAPSQDSSIYN). Residues 311–331 (GAVEAIATFGGALASFSVGYL) form a helical membrane-spanning segment. Over 332–335 (KVNW) the chain is Cytoplasmic. Residues 336–356 (DLLGELGLAVFSAVIAGSLFL) form a helical membrane-spanning segment. The Extracellular segment spans residues 357 to 369 (MNYSRSIWVCYAG). N-linked (GlcNAc...) asparagine glycosylation occurs at N358. The helical transmembrane segment at 370–390 (YLLVKSSYSFLITIAVFQIAV) threads the bilayer. At 391–399 (NLSLERYAL) the chain is on the cytoplasmic side. The chain crosses the membrane as a helical span at residues 400–420 (VFGIDTFIALVIQTIMTMIVV). Topologically, residues 421–428 (DQRGLQLP) are extracellular. A helical membrane pass occupies residues 429–449 (VTTQFLVYGSYFAVIAGVFLM). Over 450-488 (RSIYILCSAKCRKEVQNLATTRSPNEPHPQEPSNVSTKF) the chain is Cytoplasmic. Residues 469–488 (TTRSPNEPHPQEPSNVSTKF) are disordered.

It belongs to the reduced folate carrier (RFC) transporter (TC 2.A.48) family. As to expression, high expression in kidney, brain, lung and small intestine. Detected in pancreatic acinar cells (at protein level). Also expressed strongly in pancreatic islet cells.

Its subcellular location is the membrane. The catalysed reaction is thiamine(out) + H(+)(in) = thiamine(in) + H(+)(out). Functionally, high-affinity transporter for the intake of thiamine. Unlike the human ortholog, lacks H(+)-dependent pyridoxine transport activity due to an absence of seven critical amino-acids required for pyridoxine transport. This Mus musculus (Mouse) protein is Thiamine transporter 2 (Slc19a3).